The primary structure comprises 339 residues: Anthranilate phosphoribosyltransferase (339 aa).

5-phospho-alpha-D-ribose 1-diphosphate-binding positions include glycine 79, 82-83 (GD), serine 87, 89-92 (NIST), 107-115 (KHGNRSISS), and serine 119. Residue glycine 79 participates in anthranilate binding. Serine 91 contributes to the Mg(2+) binding site. Anthranilate is bound at residue asparagine 110. An anthranilate-binding site is contributed by arginine 165. Residues aspartate 224 and glutamate 225 each coordinate Mg(2+).

Belongs to the anthranilate phosphoribosyltransferase family. In terms of assembly, homodimer. It depends on Mg(2+) as a cofactor.

The enzyme catalyses N-(5-phospho-beta-D-ribosyl)anthranilate + diphosphate = 5-phospho-alpha-D-ribose 1-diphosphate + anthranilate. The protein operates within amino-acid biosynthesis; L-tryptophan biosynthesis; L-tryptophan from chorismate: step 2/5. Functionally, catalyzes the transfer of the phosphoribosyl group of 5-phosphorylribose-1-pyrophosphate (PRPP) to anthranilate to yield N-(5'-phosphoribosyl)-anthranilate (PRA). This is Anthranilate phosphoribosyltransferase from Listeria monocytogenes serovar 1/2a (strain ATCC BAA-679 / EGD-e).